Consider the following 353-residue polypeptide: Thrombopoietin (353 aa).

Positions 1 to 21 (MELTELLLVVMLLLTARLTLS) are cleaved as a signal peptide. O-linked (GalNAc...) serine glycosylation is present at S22. 2 disulfides stabilise this stretch: C28/C172 and C50/C106. T58, T131, T179, and T180 each carry an O-linked (GalNAc...) threonine glycan. A glycan (O-linked (GalNAc...) serine) is linked at S184. N197 and N206 each carry an N-linked (GlcNAc...) (complex) asparagine glycan. T213 carries an O-linked (GalNAc...) threonine glycan. N234 and N255 each carry an N-linked (GlcNAc...) (complex) asparagine glycan. The disordered stretch occupies residues 257–353 (TRGLFPGPSR…THSQNLSQEG (97 aa)). S265 carries an O-linked (GalNAc...) serine glycan. Residues 275-304 (SSGTSDTGSLPPNLQPGYSPSPTHPPTGQY) show a composition bias toward polar residues. A compositionally biased stretch (pro residues) spans 324–335 (LPDPSAPTPTPT). N-linked (GlcNAc...) asparagine glycosylation is found at N340 and N348. Residues 343–353 (YTHSQNLSQEG) are compositionally biased toward polar residues.

This sequence belongs to the EPO/TPO family. As to quaternary structure, interacts with MPL/TPOR.

Its subcellular location is the secreted. Its function is as follows. Lineage-specific cytokine affecting the proliferation and maturation of megakaryocytes from their committed progenitor cells. It acts at a late stage of megakaryocyte development. It may be the major physiological regulator of circulating platelets. The chain is Thrombopoietin (THPO) from Homo sapiens (Human).